Reading from the N-terminus, the 398-residue chain is Acetate kinase (398 aa).

Asn7 contacts Mg(2+). Residue Lys14 participates in ATP binding. Residue Arg91 coordinates substrate. The active-site Proton donor/acceptor is the Asp148. Residues His208–Gly212, Asp283–Arg285, and Gly331–His335 contribute to the ATP site. A Mg(2+)-binding site is contributed by Glu386.

This sequence belongs to the acetokinase family. As to quaternary structure, homodimer. Mg(2+) serves as cofactor. Requires Mn(2+) as cofactor.

Its subcellular location is the cytoplasm. It catalyses the reaction acetate + ATP = acetyl phosphate + ADP. Its pathway is metabolic intermediate biosynthesis; acetyl-CoA biosynthesis; acetyl-CoA from acetate: step 1/2. Its function is as follows. Catalyzes the formation of acetyl phosphate from acetate and ATP. Can also catalyze the reverse reaction. The protein is Acetate kinase of Clostridium botulinum (strain Eklund 17B / Type B).